The primary structure comprises 814 residues: Putative E3 ubiquitin-protein ligase RF298 (814 aa).

Disordered regions lie at residues 1–51 (MVEK…ASLT), 221–301 (SVSN…TKSA), and 411–441 (ALPA…STKP). Residues 221-231 (SVSNASKSSES) show a composition bias toward low complexity. Positions 289-301 (SVSTASGEGTKSA) are enriched in polar residues. Over residues 423-435 (SEKKSGSEPEEKP) the composition is skewed to basic and acidic residues. The stretch at 506-710 (ELKALRKEKE…KLKSDSLKIA (205 aa)) forms a coiled coil. Residues 760–800 (CVMCLSEEMSVIFLPCAHQVLCSKCNQLHEKEAMEDCPSCR) form an RING-type zinc finger.

Belongs to the RING-type zinc finger family.

The enzyme catalyses S-ubiquitinyl-[E2 ubiquitin-conjugating enzyme]-L-cysteine + [acceptor protein]-L-lysine = [E2 ubiquitin-conjugating enzyme]-L-cysteine + N(6)-ubiquitinyl-[acceptor protein]-L-lysine.. It participates in protein modification; protein ubiquitination. The sequence is that of Putative E3 ubiquitin-protein ligase RF298 (RF298) from Arabidopsis thaliana (Mouse-ear cress).